The primary structure comprises 589 residues: Glutamine--fructose-6-phosphate aminotransferase [isomerizing] (589 aa).

Cys-2 functions as the Nucleophile; for GATase activity in the catalytic mechanism. In terms of domain architecture, Glutamine amidotransferase type-2 spans 2–221 (CGIIGIVSLR…DDELGFITPE (220 aa)). SIS domains follow at residues 286-426 (VIEE…KMEK) and 445-579 (IGEE…PDKP). Lys-584 acts as the For Fru-6P isomerization activity in catalysis.

In terms of assembly, homodimer.

It is found in the cytoplasm. It carries out the reaction D-fructose 6-phosphate + L-glutamine = D-glucosamine 6-phosphate + L-glutamate. Its function is as follows. Catalyzes the first step in hexosamine metabolism, converting fructose-6P into glucosamine-6P using glutamine as a nitrogen source. The protein is Glutamine--fructose-6-phosphate aminotransferase [isomerizing] of Sulfurisphaera tokodaii (strain DSM 16993 / JCM 10545 / NBRC 100140 / 7) (Sulfolobus tokodaii).